The primary structure comprises 449 residues: Tubulin beta chain (449 aa).

The GTP site is built by Gln11, Glu71, Ser140, Gly144, Thr145, Gly146, Asn206, and Asn228. Glu71 is a binding site for Mg(2+).

The protein belongs to the tubulin family. As to quaternary structure, dimer of alpha and beta chains. A typical microtubule is a hollow water-filled tube with an outer diameter of 25 nm and an inner diameter of 15 nM. Alpha-beta heterodimers associate head-to-tail to form protofilaments running lengthwise along the microtubule wall with the beta-tubulin subunit facing the microtubule plus end conferring a structural polarity. Microtubules usually have 13 protofilaments but different protofilament numbers can be found in some organisms and specialized cells. Requires Mg(2+) as cofactor.

Its subcellular location is the cytoplasm. It is found in the cytoskeleton. Tubulin is the major constituent of microtubules, a cylinder consisting of laterally associated linear protofilaments composed of alpha- and beta-tubulin heterodimers. Microtubules grow by the addition of GTP-tubulin dimers to the microtubule end, where a stabilizing cap forms. Below the cap, tubulin dimers are in GDP-bound state, owing to GTPase activity of alpha-tubulin. The protein is Tubulin beta chain (TUBB) of Cicer arietinum (Chickpea).